The sequence spans 258 residues: Imidazole glycerol phosphate synthase subunit HisF (258 aa).

Residues Asp-11 and Asp-130 contribute to the active site.

Belongs to the HisA/HisF family. As to quaternary structure, heterodimer of HisH and HisF.

It is found in the cytoplasm. The catalysed reaction is 5-[(5-phospho-1-deoxy-D-ribulos-1-ylimino)methylamino]-1-(5-phospho-beta-D-ribosyl)imidazole-4-carboxamide + L-glutamine = D-erythro-1-(imidazol-4-yl)glycerol 3-phosphate + 5-amino-1-(5-phospho-beta-D-ribosyl)imidazole-4-carboxamide + L-glutamate + H(+). It participates in amino-acid biosynthesis; L-histidine biosynthesis; L-histidine from 5-phospho-alpha-D-ribose 1-diphosphate: step 5/9. Its function is as follows. IGPS catalyzes the conversion of PRFAR and glutamine to IGP, AICAR and glutamate. The HisF subunit catalyzes the cyclization activity that produces IGP and AICAR from PRFAR using the ammonia provided by the HisH subunit. This Stenotrophomonas maltophilia (strain R551-3) protein is Imidazole glycerol phosphate synthase subunit HisF.